Reading from the N-terminus, the 181-residue chain is Protein Syd (181 aa).

This sequence belongs to the Syd family.

It is found in the cell inner membrane. Interacts with the SecY protein in vivo. May bind preferentially to an uncomplexed state of SecY, thus functioning either as a chelating agent for excess SecY in the cell or as a regulatory factor that negatively controls the translocase function. In Escherichia coli (strain K12 / DH10B), this protein is Protein Syd.